The following is a 653-amino-acid chain: MPSTDLKKQADAAVESDVNTNNEAVESSTKEESSNTPSTETQPEKKAEEPEAAAEPSESTSTPTNASSVATPSGTAPTSASLYVGELDPSVTEAMLFELFNSIGPVASIRVCRDAVTRRSLGYAYVNFHNMEDGEKALDELNYTLIKGRPCRIMWSQRDPSLRKMGTGNVFIKNLDPAIDNKALHDTFSAFGKILSCKVAVDELGNAKGYGFVHFDSVESANAAIEHVNGMLLNDKKVYVGHHVSRRERQSKVEALKANFTNVYIKNLDTEITEQEFSDLFGQFGEITSLSLVKDQNDKPRGFGFVNYANHECAQKAVDELNDKEYKGKKLYVGRAQKKHEREEELRKRYEQMKLEKMNKYQGVNLFIKNLQDEVDDERLKAEFSAFGTITSAKIMTDEQGKSKGFGFVCYTTPEEANKAVTEMNQRMLAGKPLYVALAQRKEVRRSQLEAQIQARNQFRLQQQVAAAAGIPAVQYGATGPLIYGPGGYPIPAAVNGRGMPMVPGHNGPMPMYPGMPTQFPAGGPAPGYPGMNARGPVPAQGRPMMMPGSVPSAGPAEAEAVPAVPGMPERFTAADLAAVPEESRKQVLGELLYPKVFVREEKLSGKITGMLLEMPNSELLELLEDDSALNERVNEAIGVLQEFVDQEPGFTE.

Over residues 1–10 the composition is skewed to basic and acidic residues; it reads MPSTDLKKQA. Residues 1–77 are disordered; the sequence is MPSTDLKKQA…SVATPSGTAP (77 aa). A compositionally biased stretch (polar residues) spans 17 to 27; the sequence is DVNTNNEAVES. The segment covering 53–68 has biased composition (low complexity); it reads AAEPSESTSTPTNASS. Residues 80–158 form the RRM 1 domain; that stretch reads ASLYVGELDP…RPCRIMWSQR (79 aa). At Thr167 the chain carries Phosphothreonine. RRM domains are found at residues 168-245, 261-338, and 364-441; these read GNVF…HHVS, TNVY…RAQK, and VNLF…LAQR. The PABC domain maps to 569–646; that stretch reads PERFTAADLA…AIGVLQEFVD (78 aa).

The protein belongs to the polyadenylate-binding protein type-1 family. In terms of assembly, interacts with cid13.

It is found in the cytoplasm. It localises to the nucleus. Binds the poly(A) tail of mRNA. Appears to be an important mediator of the multiple roles of the poly(A) tail in mRNA biogenesis, stability and translation. In the nucleus, involved in both mRNA cleavage and polyadenylation. Is also required for efficient mRNA export to the cytoplasm. Acts in concert with a poly(A)-specific nuclease (PAN) to affect poly(A) tail shortening, which may occur concomitantly with either nucleocytoplasmic mRNA transport or translational initiation. In the cytoplasm, stimulates translation initiation and regulates mRNA decay through translation termination-coupled poly(A) shortening, probably mediated by PAN. The polypeptide is Polyadenylate-binding protein, cytoplasmic and nuclear (pab1) (Schizosaccharomyces pombe (strain 972 / ATCC 24843) (Fission yeast)).